Reading from the N-terminus, the 452-residue chain is Phosphatidate cytidylyltransferase, mitochondrial (452 aa).

It belongs to the TAM41 family. It depends on Mg(2+) as a cofactor.

It localises to the mitochondrion inner membrane. It catalyses the reaction a 1,2-diacyl-sn-glycero-3-phosphate + CTP + H(+) = a CDP-1,2-diacyl-sn-glycerol + diphosphate. It participates in phospholipid metabolism; CDP-diacylglycerol biosynthesis; CDP-diacylglycerol from sn-glycerol 3-phosphate: step 3/3. In terms of biological role, catalyzes the conversion of phosphatidic acid (PA) to CDP-diacylglycerol (CDP-DAG), an essential intermediate in the synthesis of phosphatidylglycerol, cardiolipin and phosphatidylinositol. This Homo sapiens (Human) protein is Phosphatidate cytidylyltransferase, mitochondrial (TAMM41).